A 92-amino-acid chain; its full sequence is Small ribosomal subunit protein uS19 (92 aa).

The protein belongs to the universal ribosomal protein uS19 family.

Functionally, protein S19 forms a complex with S13 that binds strongly to the 16S ribosomal RNA. This Paracoccus denitrificans (strain Pd 1222) protein is Small ribosomal subunit protein uS19.